Here is a 437-residue protein sequence, read N- to C-terminus: Putrescine hydroxycinnamoyltransferase 3 (437 aa).

Catalysis depends on proton acceptor residues H151 and D383.

It belongs to the plant acyltransferase family. In terms of tissue distribution, highly expressed in roots. Expressed at low levels in shoots and flowers.

Hydroxycinnamoyl transferase that catalyzes the transfer of an acyl from p-coumaryol-CoA to putrescine, to produce coumaroyl putrescine. Can use feruloyl-CoA and caffeoyl-CoA as acyl donors. This chain is Putrescine hydroxycinnamoyltransferase 3, found in Oryza sativa subsp. japonica (Rice).